Consider the following 104-residue polypeptide: GYLGGYAAPAISYAAPAVSYAAPAVAYAAPAAVAPAALTSQSSNILRSYGNLGQVSTYTKTVDTPYSSVTKSDVRVSNDAIAHVAAPALAYAAPAAYAAPAYYH.

Repeat copies occupy residues 7 to 10, 14 to 17, 21 to 24, 28 to 31, 85 to 88, 92 to 95, and 98 to 101.

Its function is as follows. Component of the cuticle of migratory locust which contains more than 100 different structural proteins. This is Cuticle protein 67, isoform B from Locusta migratoria (Migratory locust).